A 151-amino-acid chain; its full sequence is UPF0735 ACT domain-containing protein SERP1207 (151 aa).

Residues Thr-74 to Met-149 enclose the ACT domain.

Belongs to the UPF0735 family.

This chain is UPF0735 ACT domain-containing protein SERP1207, found in Staphylococcus epidermidis (strain ATCC 35984 / DSM 28319 / BCRC 17069 / CCUG 31568 / BM 3577 / RP62A).